A 393-amino-acid polypeptide reads, in one-letter code: S-adenosylmethionine synthase (393 aa).

Glutamate 9 contacts Mg(2+). Residue histidine 15 coordinates ATP. Residue glutamate 43 participates in K(+) binding. Positions 56 and 99 each coordinate L-methionine. Residues 167–169, 235–238, aspartate 246, 252–253, alanine 269, lysine 273, and lysine 277 each bind ATP; these read DGK, SGRF, and RK. Aspartate 246 lines the L-methionine pocket. L-methionine is bound at residue lysine 277.

This sequence belongs to the AdoMet synthase family. Homotetramer. It depends on Mn(2+) as a cofactor. The cofactor is Mg(2+). Co(2+) is required as a cofactor. Requires K(+) as cofactor.

It localises to the cytoplasm. The catalysed reaction is L-methionine + ATP + H2O = S-adenosyl-L-methionine + phosphate + diphosphate. Its pathway is amino-acid biosynthesis; S-adenosyl-L-methionine biosynthesis; S-adenosyl-L-methionine from L-methionine: step 1/1. Its function is as follows. Catalyzes the formation of S-adenosylmethionine from methionine and ATP. The reaction comprises two steps that are both catalyzed by the same enzyme: formation of S-adenosylmethionine (AdoMet) and triphosphate, and subsequent hydrolysis of the triphosphate. This chain is S-adenosylmethionine synthase (SAMS), found in Litchi chinensis (Lychee).